A 281-amino-acid chain; its full sequence is Probable endonuclease 4 (281 aa).

Residues His69, His109, Glu145, Asp179, His182, His216, Asp229, His231, and Glu261 each contribute to the Zn(2+) site.

This sequence belongs to the AP endonuclease 2 family. It depends on Zn(2+) as a cofactor.

It catalyses the reaction Endonucleolytic cleavage to 5'-phosphooligonucleotide end-products.. Its function is as follows. Endonuclease IV plays a role in DNA repair. It cleaves phosphodiester bonds at apurinic or apyrimidinic (AP) sites, generating a 3'-hydroxyl group and a 5'-terminal sugar phosphate. This chain is Probable endonuclease 4, found in Aeromonas hydrophila subsp. hydrophila (strain ATCC 7966 / DSM 30187 / BCRC 13018 / CCUG 14551 / JCM 1027 / KCTC 2358 / NCIMB 9240 / NCTC 8049).